The following is a 377-amino-acid chain: Phosphoserine aminotransferase (377 aa).

Arg43 is an L-glutamate binding site. The pyridoxal 5'-phosphate site is built by Trp105, Thr164, Asp189, and Gln212. Lys213 is modified (N6-(pyridoxal phosphate)lysine). 254–255 (NT) contributes to the pyridoxal 5'-phosphate binding site.

This sequence belongs to the class-V pyridoxal-phosphate-dependent aminotransferase family. SerC subfamily. In terms of assembly, homodimer. The cofactor is pyridoxal 5'-phosphate.

The protein resides in the cytoplasm. It catalyses the reaction O-phospho-L-serine + 2-oxoglutarate = 3-phosphooxypyruvate + L-glutamate. It carries out the reaction 4-(phosphooxy)-L-threonine + 2-oxoglutarate = (R)-3-hydroxy-2-oxo-4-phosphooxybutanoate + L-glutamate. Its pathway is amino-acid biosynthesis; L-serine biosynthesis; L-serine from 3-phospho-D-glycerate: step 2/3. It participates in cofactor biosynthesis; pyridoxine 5'-phosphate biosynthesis; pyridoxine 5'-phosphate from D-erythrose 4-phosphate: step 3/5. Functionally, catalyzes the reversible conversion of 3-phosphohydroxypyruvate to phosphoserine and of 3-hydroxy-2-oxo-4-phosphonooxybutanoate to phosphohydroxythreonine. This is Phosphoserine aminotransferase from Bordetella bronchiseptica (strain ATCC BAA-588 / NCTC 13252 / RB50) (Alcaligenes bronchisepticus).